Consider the following 760-residue polypeptide: uncharacterized protein (760 aa).

A signal peptide spans 1–23 (MVIKKGFFALSSCTLGLGLILTA). C24 carries N-palmitoyl cysteine lipidation. Residue C24 is the site of S-diacylglycerol cysteine attachment. Disordered regions lie at residues 220-262 (ANGK…NSDN) and 443-482 (YEIK…NQTS). 2 stretches are compositionally biased toward polar residues: residues 222 to 257 (GKTT…SQDA) and 448 to 472 (PTNS…GKEQ).

The protein belongs to the MG185/MG260 family.

The protein resides in the cell membrane. This is an uncharacterized protein from Mycoplasma pneumoniae (strain ATCC 29342 / M129 / Subtype 1) (Mycoplasmoides pneumoniae).